The primary structure comprises 255 residues: Ribonuclease HII (255 aa).

The RNase H type-2 domain occupies 72 to 255 (AIICGIDEVG…KSFEPIKSLL (184 aa)). Residues Asp-78, Glu-79, and Asp-170 each contribute to the a divalent metal cation site.

It belongs to the RNase HII family. Requires Mn(2+) as cofactor. The cofactor is Mg(2+).

Its subcellular location is the cytoplasm. The enzyme catalyses Endonucleolytic cleavage to 5'-phosphomonoester.. Its function is as follows. Endonuclease that specifically degrades the RNA of RNA-DNA hybrids. The chain is Ribonuclease HII from Staphylococcus aureus (strain MRSA252).